We begin with the raw amino-acid sequence, 475 residues long: Arginine biosynthesis bifunctional protein ArgJ 1, mitochondrial (475 aa).

Positions 204, 233, 244, 331, 470, and 475 each coordinate substrate. T244 acts as the Nucleophile in catalysis.

The protein belongs to the ArgJ family. In terms of assembly, heterodimer of an alpha and a beta chain. In terms of processing, the alpha and beta chains are autoproteolytically processed from a single precursor protein within the mitochondrion.

The protein resides in the mitochondrion matrix. The enzyme catalyses N(2)-acetyl-L-ornithine + L-glutamate = N-acetyl-L-glutamate + L-ornithine. The catalysed reaction is L-glutamate + acetyl-CoA = N-acetyl-L-glutamate + CoA + H(+). The protein operates within amino-acid biosynthesis; L-arginine biosynthesis; L-ornithine and N-acetyl-L-glutamate from L-glutamate and N(2)-acetyl-L-ornithine (cyclic): step 1/1. It functions in the pathway amino-acid biosynthesis; L-arginine biosynthesis; N(2)-acetyl-L-ornithine from L-glutamate: step 1/4. Functionally, catalyzes two activities which are involved in the cyclic version of arginine biosynthesis: the synthesis of acetylglutamate from glutamate and acetyl-CoA, and of ornithine by transacetylation between acetylornithine and glutamate. The sequence is that of Arginine biosynthesis bifunctional protein ArgJ 1, mitochondrial from Botryotinia fuckeliana (strain B05.10) (Noble rot fungus).